A 270-amino-acid polypeptide reads, in one-letter code: MAVGKNKGTSKGGKKGSKKKVVDPFTRKDWYDVKAPNMFSNRQVGKTLVNRTQGTRIASDGLKGRVFEVSLADLQNDTDAERSFRKFKLIAEDVHGRNVLCNFHGMDLTTDKLRSMVKKWQTLIECSVDVKTTDGYLLRVFCIGFTIKDSVSQRKTCYAQHSQIKEIRRKMTTIITRDVTSSDLKEVVNKLLPDSIAKDIEKSCQGIYPLHDVYIRKVKVLKKPRFDLANLLELHGDGGGKGAEVSTGAAEGGVTIDRPEGYEPPVQESV.

2 disordered regions span residues 1 to 21 (MAVGKNKGTSKGGKKGSKKKV) and 238 to 270 (GGGKGAEVSTGAAEGGVTIDRPEGYEPPVQESV).

This sequence belongs to the eukaryotic ribosomal protein eS1 family. Component of the small ribosomal subunit. Mature ribosomes consist of a small (40S) and a large (60S) subunit. The 40S subunit contains about 33 different proteins and 1 molecule of RNA (18S). The 60S subunit contains about 49 different proteins and 3 molecules of RNA (28S, 5.8S and 5S).

The protein localises to the cytoplasm. In Aedes aegypti (Yellowfever mosquito), this protein is Small ribosomal subunit protein eS1.